The sequence spans 178 residues: Large ribosomal subunit protein uL6 (178 aa).

It belongs to the universal ribosomal protein uL6 family. In terms of assembly, part of the 50S ribosomal subunit.

In terms of biological role, this protein binds to the 23S rRNA, and is important in its secondary structure. It is located near the subunit interface in the base of the L7/L12 stalk, and near the tRNA binding site of the peptidyltransferase center. In Staphylococcus aureus (strain Mu3 / ATCC 700698), this protein is Large ribosomal subunit protein uL6.